The following is a 527-amino-acid chain: ADP-ribosylation factor-like protein 13B (527 aa).

GTP contacts are provided by residues 26–33 (GLDNAGKT), 69–73 (DLGGG), and 128–131 (NKQD). Positions 200 to 248 (EEVRQEEARKKKEREERLRKQREERLRQQKEEEERAREVEKENELHDGK) are enriched in basic and acidic residues. 2 disordered regions span residues 200–252 (EEVR…APSL) and 300–503 (GLPH…FSLV). Over residues 381-444 (QPSDAGVGSS…GSVFAPRPAS (64 aa)) the composition is skewed to low complexity. Over residues 445 to 457 (AGGGGPGSRGSGS) the composition is skewed to gly residues.

Belongs to the small GTPase superfamily. Arf family. Monomer.

Its subcellular location is the cell projection. The protein localises to the cilium membrane. In terms of biological role, cilium-specific protein required to control the microtubule-based, ciliary axoneme structure. May act by maintaining the association between IFT subcomplexes A and B. The protein is ADP-ribosylation factor-like protein 13B (ARL13) of Chlamydomonas reinhardtii (Chlamydomonas smithii).